We begin with the raw amino-acid sequence, 173 residues long: Putative phosphoesterase GK0864 (173 aa).

Catalysis depends on histidine 34, which acts as the Proton donor. 2 short sequence motifs (HXTX) span residues 34–37 (HITL) and 115–118 (HITI). The Proton acceptor role is filled by histidine 115.

It belongs to the 2H phosphoesterase superfamily. YjcG family.

The sequence is that of Putative phosphoesterase GK0864 from Geobacillus kaustophilus (strain HTA426).